A 1077-amino-acid polypeptide reads, in one-letter code: RNA polymerase-associated protein CTR9 (1077 aa).

TPR repeat units lie at residues 56-89 (KEHWLTIALAYCNHGKTNEGIKLIEMALDVFQNS), 138-174 (IGNMLATVELYYQRGHYDKALETSDLFVKSIHAEDHR), 183-216 (CLFLLLRAKLLYQKKNYMASLKIFQELLVINPVL), 218-251 (PDPRIGIGLCFWQLKDSKMAIKSWQRALQLNPKN), 298-332 (PVLLTLLQTYYYFKGDYQTVLDIYHHRILKMSPMI), 338-371 (SESSFWCGRAHYALGDYRKSFIMFQESLKKNEDN), 373-405 (LAKLGLGQTQIKNNLLEESIITFENLYKTNESL), 421-455 (FDAKTAKNTSAKEQSNLNEKALKYLERYLKLTLAT), 462-495 (SRAYLVISQLYELQNQYKTSLDYLSKALEEMEFI), 501-534 (LEVLNNLACYHFINGDFIKADDLFKQAKAKVSDK), 540-572 (ITLEYNIARTNEKNDCEKSESIYSQVTSLHPAY), 664-697 (GKKSRNPKEQEKSKHSYLKAIQLYQKVLQVDPFN), 699-731 (FAAQGLAIIFAESKRLGPALEILRKVRDSLDNE), 732-764 (DVQLNLAHCYLEMREYGKAIENYELVLKKFDNE), 768-801 (PHILNLLGRAWYARAIKERSVNFYQKALENAKTA), and 830-863 (AETLRRSNPKFRTVQQIKDSLEGLKEGLELFREL). Residues 959–980 (EREAMAISEHNVKDDSDLSDKD) show a composition bias toward basic and acidic residues. Residues 959-1077 (EREAMAISEH…NDNDDNDGLF (119 aa)) form a disordered region. Phosphoserine is present on residues S1015 and S1017. Composition is skewed to acidic residues over residues 1042–1051 (FIEDSDEEEA) and 1063–1077 (DNDENNDNDDNDGLF).

In terms of assembly, component of the PAF1 complex which consists of at least CDC73, CTR9, LEO1, PAF1 and RTF1. Interacts with SPT6. Interacts with FACT subunits POB3 and SPT16.

It is found in the nucleus. It localises to the nucleoplasm. In terms of biological role, the PAF1 complex is a multifunctional complex. Involved in transcription initiation via genetic interactions with TATA-binding proteins. Involved in elongation. It regulates 3'-end formation of snR47 by modulating the recruitment or stable association of NRD1 and NAB3 with RNA polymerase II. Also has a role in transcription-coupled histone modification. Required for activation of RAD6 ubiquitin conjugate and the BRE1 ubiquitin ligase which ubiquitinate 'Lys-126' histone H2B. Activates the SET1 histone methyltransferase complex for methylation of 'Lys-4' of histone H3 and for methylation of 'Lys-73' of histone H3 by DOT1 and 'Lys-36' of histone H3 by SET2. In complex with PAF1, required for normal CLN1 and CLN2 G1 cyclin expression in late G1. Also has a role in chromosome segregation where it appears to be involved in microtubule placement. This chain is RNA polymerase-associated protein CTR9 (CTR9), found in Saccharomyces cerevisiae (strain ATCC 204508 / S288c) (Baker's yeast).